Reading from the N-terminus, the 480-residue chain is Selenium-binding protein 3 (480 aa).

Selenite is bound by residues cysteine 12 and cysteine 13.

This sequence belongs to the selenium-binding protein family. As to expression, expressed in young seedlings, mostly in roots.

The protein is Selenium-binding protein 3 (SBP3) of Arabidopsis thaliana (Mouse-ear cress).